Reading from the N-terminus, the 376-residue chain is uncharacterized protein (376 aa).

A helical membrane pass occupies residues 19–39 (FVLISLILLLNLGLLLGIQIY).

This sequence to S.pombe SpAC5H10.12c.

The protein localises to the cytoplasm. It localises to the nucleus. The protein resides in the membrane. This is an uncharacterized protein from Schizosaccharomyces pombe (strain 972 / ATCC 24843) (Fission yeast).